The chain runs to 199 residues: Fe/S biogenesis protein NfuA (199 aa).

Residues C151 and C154 each contribute to the [4Fe-4S] cluster site.

The protein belongs to the NfuA family. In terms of assembly, homodimer. [4Fe-4S] cluster serves as cofactor.

Functionally, involved in iron-sulfur cluster biogenesis. Binds a 4Fe-4S cluster, can transfer this cluster to apoproteins, and thereby intervenes in the maturation of Fe/S proteins. Could also act as a scaffold/chaperone for damaged Fe/S proteins. The chain is Fe/S biogenesis protein NfuA from Xanthomonas oryzae pv. oryzae (strain MAFF 311018).